The chain runs to 194 residues: WASH complex subunit 3 (194 aa).

Residue Met1 is modified to N-acetylmethionine. A coiled-coil region spans residues 46–74 (TVCEEKLADLSLRIQQIETTLNILDAKLS). Disordered regions lie at residues 93–121 (SVTN…QESE) and 159–194 (EGLD…SFSD). Polar residues predominate over residues 103–121 (TSEQPQQNSTQDSGLQESE).

This sequence belongs to the CCDC53 family. In terms of assembly, component of the WASH core complex also described as WASH regulatory complex (SHRC) composed of WASH (WASHC1, WASH2P or WASH3P), WASHC2 (WASHC2A or WASHC2C), WASHC3, WASHC4 and WASHC5. The WASH core complex associates via WASHC2 with the F-actin-capping protein dimer (formed by CAPZA1, CAPZA2 or CAPZA3 and CAPZB) in a transient or substoichiometric manner which was initially described as WASH complex.

Its subcellular location is the early endosome. Acts as a component of the WASH core complex that functions as a nucleation-promoting factor (NPF) at the surface of endosomes, where it recruits and activates the Arp2/3 complex to induce actin polymerization, playing a key role in the fission of tubules that serve as transport intermediates during endosome sorting. The sequence is that of WASH complex subunit 3 from Homo sapiens (Human).